Reading from the N-terminus, the 158-residue chain is Acetolactate synthase small subunit (158 aa).

One can recognise an ACT domain in the interval 4 to 78 (ILSVLLENES…DVLRVIKVGQ (75 aa)).

This sequence belongs to the acetolactate synthase small subunit family. Dimer of large and small chains.

It catalyses the reaction 2 pyruvate + H(+) = (2S)-2-acetolactate + CO2. It functions in the pathway amino-acid biosynthesis; L-isoleucine biosynthesis; L-isoleucine from 2-oxobutanoate: step 1/4. Its pathway is amino-acid biosynthesis; L-valine biosynthesis; L-valine from pyruvate: step 1/4. The protein is Acetolactate synthase small subunit (ilvH) of Buchnera aphidicola subsp. Schizaphis graminum (strain Sg).